A 616-amino-acid chain; its full sequence is Chaperone protein HscA (616 aa).

Belongs to the heat shock protein 70 family.

Its function is as follows. Chaperone involved in the maturation of iron-sulfur cluster-containing proteins. Has a low intrinsic ATPase activity which is markedly stimulated by HscB. Involved in the maturation of IscU. This chain is Chaperone protein HscA, found in Salmonella agona (strain SL483).